Here is a 697-residue protein sequence, read N- to C-terminus: uncharacterized protein (697 aa).

The zn(2)-C6 fungal-type DNA-binding region spans 24–51 (CIRCRQKKIKCSGEKPSCQACSNNKVEC). The chain crosses the membrane as a helical span at residues 500 to 520 (YIMSPFVGFSILTAATIHMLL).

It localises to the nucleus membrane. This is an uncharacterized protein from Schizosaccharomyces pombe (strain 972 / ATCC 24843) (Fission yeast).